The following is a 394-amino-acid chain: Obg-like ATPase 1 (394 aa).

Residues 25–282 (LKIGIVGLPN…MPPDEAAKYC (258 aa)) form the OBG-type G domain. ATP is bound by residues 34-39 (NVGKST), 56-60 (FCTID), and 94-97 (DIAG). A GTP-binding site is contributed by 34 to 39 (NVGKST). Mg(2+) contacts are provided by serine 38 and threonine 58. GTP-binding residues include phenylalanine 129 and asparagine 230. Residues 230 to 231 (NM), methionine 231, and 263 to 265 (SCA) contribute to the ATP site. 263–265 (SCA) contributes to the GTP binding site. Residues 303–386 (HLIYFFTAGP…QDGDIIFFKF (84 aa)) enclose the TGS domain.

This sequence belongs to the TRAFAC class OBG-HflX-like GTPase superfamily. OBG GTPase family. YchF/OLA1 subfamily. As to quaternary structure, monomer (Potential). Interacts with GAP1. Requires Mg(2+) as cofactor.

It localises to the cell membrane. It is found in the cytoplasm. The protein localises to the cytosol. Activated by GAP1. Its function is as follows. Hydrolyzes ATP, and can also hydrolyze GTP with lower efficiency. Has lower affinity for GTP (Potential). Exhibits GTPase activity. Exhibits similar binding affinities and hydrolytic activities toward both GTP and ATP. Binds to the 26 S ribosomal RNA in vitro, but not to the 5.8 S or 18 S rRNA. Confers sensitivity to salinity stress by suppressing the anti-oxidation enzymatic activities and increasing lipid peroxidation thus leading to the accumulation of reactive oxygen species (ROS). This Oryza sativa subsp. japonica (Rice) protein is Obg-like ATPase 1.